Here is a 172-residue protein sequence, read N- to C-terminus: Putative metal-dependent hydrolase OB0782 (172 aa).

Zn(2+) contacts are provided by H64, H155, and H159.

The protein belongs to the metal hydrolase YfiT family. In terms of assembly, homodimer. Zn(2+) is required as a cofactor.

It is found in the cytoplasm. Possible metal-dependent hydrolase. The sequence is that of Putative metal-dependent hydrolase OB0782 from Oceanobacillus iheyensis (strain DSM 14371 / CIP 107618 / JCM 11309 / KCTC 3954 / HTE831).